Reading from the N-terminus, the 455-residue chain is Bifunctional protein GlmU (455 aa).

The segment at 1-226 (MALNVVILAA…AIEVEGANNR (226 aa)) is pyrophosphorylase. Residues 8–11 (LAAG), Lys22, Gln73, 78–79 (GT), 100–102 (YGD), Gly137, Glu151, Asn166, and Asn224 each bind UDP-N-acetyl-alpha-D-glucosamine. Position 102 (Asp102) interacts with Mg(2+). Mg(2+) is bound at residue Asn224. A linker region spans residues 227–247 (VQLAQLERAYQARAAEKLMLE). The tract at residues 248 to 455 (GANLRDPARL…WARPVKKPKS (208 aa)) is N-acetyltransferase. Arg330 and Lys348 together coordinate UDP-N-acetyl-alpha-D-glucosamine. His360 serves as the catalytic Proton acceptor. UDP-N-acetyl-alpha-D-glucosamine is bound by residues Tyr363 and Asn374. Residues Ala377, 383–384 (NY), Ser402, Ala420, and Arg437 contribute to the acetyl-CoA site.

In the N-terminal section; belongs to the N-acetylglucosamine-1-phosphate uridyltransferase family. It in the C-terminal section; belongs to the transferase hexapeptide repeat family. As to quaternary structure, homotrimer. Mg(2+) is required as a cofactor.

Its subcellular location is the cytoplasm. It carries out the reaction alpha-D-glucosamine 1-phosphate + acetyl-CoA = N-acetyl-alpha-D-glucosamine 1-phosphate + CoA + H(+). The catalysed reaction is N-acetyl-alpha-D-glucosamine 1-phosphate + UTP + H(+) = UDP-N-acetyl-alpha-D-glucosamine + diphosphate. Its pathway is nucleotide-sugar biosynthesis; UDP-N-acetyl-alpha-D-glucosamine biosynthesis; N-acetyl-alpha-D-glucosamine 1-phosphate from alpha-D-glucosamine 6-phosphate (route II): step 2/2. It functions in the pathway nucleotide-sugar biosynthesis; UDP-N-acetyl-alpha-D-glucosamine biosynthesis; UDP-N-acetyl-alpha-D-glucosamine from N-acetyl-alpha-D-glucosamine 1-phosphate: step 1/1. It participates in bacterial outer membrane biogenesis; LPS lipid A biosynthesis. In terms of biological role, catalyzes the last two sequential reactions in the de novo biosynthetic pathway for UDP-N-acetylglucosamine (UDP-GlcNAc). The C-terminal domain catalyzes the transfer of acetyl group from acetyl coenzyme A to glucosamine-1-phosphate (GlcN-1-P) to produce N-acetylglucosamine-1-phosphate (GlcNAc-1-P), which is converted into UDP-GlcNAc by the transfer of uridine 5-monophosphate (from uridine 5-triphosphate), a reaction catalyzed by the N-terminal domain. This Shewanella sediminis (strain HAW-EB3) protein is Bifunctional protein GlmU.